Reading from the N-terminus, the 433-residue chain is Homoserine O-acetyltransferase (433 aa).

In terms of domain architecture, AB hydrolase-1 spans 41-385 (NVVLVCHALT…HGHDAFLVEP (345 aa)). Positions 55-74 (VARSPAPERNEGTRGAGQAG) are disordered. The Nucleophile role is filled by Ser166. Arg237 is a substrate binding site. Residues Asp345 and His378 contribute to the active site. A substrate-binding site is contributed by Asp379. The tract at residues 403 to 433 (RAVSDDGGGGGNDSARPERDHAPVHASLFKG) is disordered.

Belongs to the AB hydrolase superfamily. MetX family. Homodimer.

The protein localises to the cytoplasm. The catalysed reaction is L-homoserine + acetyl-CoA = O-acetyl-L-homoserine + CoA. Its pathway is amino-acid biosynthesis; L-methionine biosynthesis via de novo pathway; O-acetyl-L-homoserine from L-homoserine: step 1/1. Functionally, transfers an acetyl group from acetyl-CoA to L-homoserine, forming acetyl-L-homoserine. This is Homoserine O-acetyltransferase from Halorubrum lacusprofundi (strain ATCC 49239 / DSM 5036 / JCM 8891 / ACAM 34).